Here is a 750-residue protein sequence, read N- to C-terminus: Tyrosine-protein phosphatase 2 (750 aa).

A disordered region spans residues 1-20; that stretch reads MDRIAQQYRNGKRDNNGNRM. Ser-258 carries the phosphoserine modification. Disordered stretches follow at residues 327–348 and 425–450; these read LHQK…SKLY and VKLP…DKSY. The segment covering 330–348 has biased composition (polar residues); sequence KQLSQKQRGPQSTDDSKLY. In terms of domain architecture, Tyrosine-protein phosphatase spans 383–737; that stretch reads SPSPLSSDDT…IACYEALLNY (355 aa). Ser-430 is modified (phosphoserine). Cys-666 (phosphocysteine intermediate) is an active-site residue.

Belongs to the protein-tyrosine phosphatase family. Non-receptor class subfamily. As to quaternary structure, interacts with HOG1.

The protein resides in the cytoplasm. It localises to the nucleus. It catalyses the reaction O-phospho-L-tyrosyl-[protein] + H2O = L-tyrosyl-[protein] + phosphate. Its function is as follows. Major phosphatase responsible with PTP3 for tyrosine dephosphorylation of MAP kinase HOG1 to inactivate its activity. May also be involved in the regulation of MAP kinase FUS3. May be implicated in the ubiquitin-mediated protein degradation. The sequence is that of Tyrosine-protein phosphatase 2 (PTP2) from Saccharomyces cerevisiae (strain ATCC 204508 / S288c) (Baker's yeast).